A 386-amino-acid polypeptide reads, in one-letter code: Succinate--CoA ligase [ADP-forming] subunit beta (386 aa).

An ATP-grasp domain is found at 9-244 (KEILRKYGVP…HDEEDPLETR (236 aa)). ATP-binding positions include Lys-46, 53-55 (GRG), Glu-99, Cys-102, and Glu-107. Residues Asn-199 and Asp-213 each coordinate Mg(2+). Residues Asn-264 and 321 to 323 (GIM) each bind substrate.

Belongs to the succinate/malate CoA ligase beta subunit family. In terms of assembly, heterotetramer of two alpha and two beta subunits. Mg(2+) is required as a cofactor.

It catalyses the reaction succinate + ATP + CoA = succinyl-CoA + ADP + phosphate. The enzyme catalyses GTP + succinate + CoA = succinyl-CoA + GDP + phosphate. Its pathway is carbohydrate metabolism; tricarboxylic acid cycle; succinate from succinyl-CoA (ligase route): step 1/1. Functionally, succinyl-CoA synthetase functions in the citric acid cycle (TCA), coupling the hydrolysis of succinyl-CoA to the synthesis of either ATP or GTP and thus represents the only step of substrate-level phosphorylation in the TCA. The beta subunit provides nucleotide specificity of the enzyme and binds the substrate succinate, while the binding sites for coenzyme A and phosphate are found in the alpha subunit. In Rickettsia massiliae (strain Mtu5), this protein is Succinate--CoA ligase [ADP-forming] subunit beta.